The sequence spans 153 residues: Small ribosomal subunit protein uS9 (153 aa).

The disordered stretch occupies residues Lys122–Arg153. Positions Arg129 to Lys138 are enriched in basic and acidic residues. Residues Tyr139 to Arg153 show a composition bias toward basic residues.

Belongs to the universal ribosomal protein uS9 family.

The polypeptide is Small ribosomal subunit protein uS9 (rpsI) (Mycobacterium leprae (strain TN)).